The sequence spans 196 residues: Large ribosomal subunit protein uL6 (196 aa).

Belongs to the universal ribosomal protein uL6 family. As to quaternary structure, part of the 50S ribosomal subunit.

Functionally, this protein binds to the 23S rRNA, and is important in its secondary structure. It is located near the subunit interface in the base of the L7/L12 stalk, and near the tRNA binding site of the peptidyltransferase center. In Pyrobaculum aerophilum (strain ATCC 51768 / DSM 7523 / JCM 9630 / CIP 104966 / NBRC 100827 / IM2), this protein is Large ribosomal subunit protein uL6.